Here is a 23-residue protein sequence, read N- to C-terminus: Potassium channel toxin kappa-KTx 1.2 (23 aa).

Intrachain disulfides connect Cys-4/Cys-22 and Cys-8/Cys-18. Cys-22 is modified (cysteine amide).

The protein belongs to the short scorpion toxin superfamily. Potassium channel inhibitor kappa-KTx family. Kappa-KTx 1 subfamily. The two disulfide isomers globular (C1-C3, C2-C4) and beads (C1-C2, C3-C4) do not show activity on Kv10.1/KCNH1/EAG1. As to expression, expressed by the venom gland.

It is found in the secreted. Shows weak blocking activity on voltage-gated potassium channels Kv10.1/KCNH1/EAG1 (IC(50)=26 uM), Kv1.2/KCNA2 (Kd=150 uM), Kv1.3/KCNA3 (Kd=40 uM), Kv1.6/KCNA3 (16.6% inhibition at 40 uM toxin). The block is dose-dependent, voltage-independent, and reversible. Also shows a weak inhibitory activity on the plant pathogen F.culmorum growth (IC(50)=18.8-37.7 uM). The polypeptide is Potassium channel toxin kappa-KTx 1.2 (Chersonesometrus fulvipes (Indian black scorpion)).